Here is a 130-residue protein sequence, read N- to C-terminus: Small ribosomal subunit protein uS9 (130 aa).

Belongs to the universal ribosomal protein uS9 family.

The chain is Small ribosomal subunit protein uS9 from Shewanella sediminis (strain HAW-EB3).